The chain runs to 1159 residues: RAD51-associated protein 2 (1159 aa).

The segment at 1-35 (MSLPQPTPRMAELRKPTSSLTPPEDPDSQPPSSKR) is disordered. The segment at 1111-1159 (SHFPHGISRVRPLKTCSRPIRIGLSRKARIKQLHPYLKQMCYGNLKENF) is interaction with RAD51.

In terms of assembly, interacts with RAD51. As to expression, specifically expressed in meiotic tissues. Highly expressed in testis.

This is RAD51-associated protein 2 (RAD51AP2) from Homo sapiens (Human).